A 207-amino-acid polypeptide reads, in one-letter code: Large ribosomal subunit protein uL4 (207 aa).

Belongs to the universal ribosomal protein uL4 family. As to quaternary structure, part of the 50S ribosomal subunit.

Its function is as follows. One of the primary rRNA binding proteins, this protein initially binds near the 5'-end of the 23S rRNA. It is important during the early stages of 50S assembly. It makes multiple contacts with different domains of the 23S rRNA in the assembled 50S subunit and ribosome. Forms part of the polypeptide exit tunnel. This chain is Large ribosomal subunit protein uL4, found in Pelagibacter ubique (strain HTCC1062).